The chain runs to 214 residues: ER lumen protein-retaining receptor 3 (214 aa).

Topologically, residues 1–4 (MNIF) are lumenal. Residues 5–24 (RILGDVSHLLAIIILLLKMW) form a helical membrane-spanning segment. Topologically, residues 25–32 (KSKSCAGI) are cytoplasmic. Residues 33–52 (SGKSQLLFALVFTTRYLDLF) form a helical membrane-spanning segment. Residues 47–48 (RY) are interaction with the K-D-E-L motif on target proteins. At 53-58 (TVFISP) the chain is on the lumenal side. Residues 59 to 79 (YNTVMKIIFLACAYVTVYLIY) traverse the membrane as a helical segment. Residues 80–92 (GKLRKSYDSENDT) are Cytoplasmic-facing. Residues 93–110 (FRLEFLLVPVIGLSFLEN) form a helical membrane-spanning segment. At 111–116 (YEFTPL) the chain is on the lumenal side. A helical transmembrane segment spans residues 117–135 (EILWTFSIYLESVAILPQL). Residues 136 to 149 (FMISKTGEAESITT) are Cytoplasmic-facing. The helical transmembrane segment at 150 to 168 (HYLFFLGLYRVLYLANWIW) threads the bilayer. The segment at 159 to 169 (RVLYLANWIWR) is interaction with the K-D-E-L motif on target proteins. At 169–178 (RYHTEKFYDQ) the chain is on the lumenal side. A helical transmembrane segment spans residues 179-199 (IAVVSGVVQTIFYFDFFYLYV). Topologically, residues 200–214 (TKVLKGKKLSLPMPV) are cytoplasmic. Positions 204–207 (KGKK) are important for recycling of cargo proteins with the sequence motif K-D-E-L from the Golgi to the endoplasmic reticulum.

The protein belongs to the ERD2 family.

Its subcellular location is the endoplasmic reticulum membrane. It is found in the golgi apparatus membrane. The protein localises to the cytoplasmic vesicle. The protein resides in the COPI-coated vesicle membrane. In terms of biological role, receptor for the C-terminal sequence motif K-D-E-L that is present on endoplasmic reticulum resident proteins and that mediates their recycling from the Golgi back to the endoplasmic reticulum. The sequence is that of ER lumen protein-retaining receptor 3 (kdelr3) from Xenopus laevis (African clawed frog).